The sequence spans 178 residues: Large ribosomal subunit protein uL10 (178 aa).

The protein belongs to the universal ribosomal protein uL10 family. Part of the ribosomal stalk of the 50S ribosomal subunit. The N-terminus interacts with L11 and the large rRNA to form the base of the stalk. The C-terminus forms an elongated spine to which L12 dimers bind in a sequential fashion forming a multimeric L10(L12)X complex.

Forms part of the ribosomal stalk, playing a central role in the interaction of the ribosome with GTP-bound translation factors. This chain is Large ribosomal subunit protein uL10, found in Albidiferax ferrireducens (strain ATCC BAA-621 / DSM 15236 / T118) (Rhodoferax ferrireducens).